A 312-amino-acid chain; its full sequence is Acetyl-coenzyme A carboxylase carboxyl transferase subunit alpha (312 aa).

In terms of domain architecture, CoA carboxyltransferase C-terminal spans 36–286 (RLDKEVKSIY…KEYFLDALRT (251 aa)).

Belongs to the AccA family. In terms of assembly, acetyl-CoA carboxylase is a heterohexamer composed of biotin carboxyl carrier protein (AccB), biotin carboxylase (AccC) and two subunits each of ACCase subunit alpha (AccA) and ACCase subunit beta (AccD).

It is found in the cytoplasm. The enzyme catalyses N(6)-carboxybiotinyl-L-lysyl-[protein] + acetyl-CoA = N(6)-biotinyl-L-lysyl-[protein] + malonyl-CoA. It functions in the pathway lipid metabolism; malonyl-CoA biosynthesis; malonyl-CoA from acetyl-CoA: step 1/1. Functionally, component of the acetyl coenzyme A carboxylase (ACC) complex. First, biotin carboxylase catalyzes the carboxylation of biotin on its carrier protein (BCCP) and then the CO(2) group is transferred by the carboxyltransferase to acetyl-CoA to form malonyl-CoA. The chain is Acetyl-coenzyme A carboxylase carboxyl transferase subunit alpha from Helicobacter pylori (strain J99 / ATCC 700824) (Campylobacter pylori J99).